The sequence spans 263 residues: Oxygen-evolving enhancer protein 2, chloroplastic (263 aa).

A chloroplast-targeting transit peptide spans 1–78; that stretch reads MAAASCFHAL…VGTKVSPADA (78 aa). Residues 14 to 30 show a composition bias toward low complexity; the sequence is ARSSSSSLQSSSSRLPA. The tract at residues 14–34 is disordered; it reads ARSSSSSLQSSSSRLPAPIKP.

This sequence belongs to the PsbP family.

Its subcellular location is the plastid. It localises to the chloroplast thylakoid membrane. May be involved in the regulation of photosystem II. The sequence is that of Oxygen-evolving enhancer protein 2, chloroplastic from Helianthus annuus (Common sunflower).